Consider the following 125-residue polypeptide: Large ribosomal subunit protein bL12 (125 aa).

Belongs to the bacterial ribosomal protein bL12 family. As to quaternary structure, homodimer. Part of the ribosomal stalk of the 50S ribosomal subunit. Forms a multimeric L10(L12)X complex, where L10 forms an elongated spine to which 2 to 4 L12 dimers bind in a sequential fashion. Binds GTP-bound translation factors.

Its function is as follows. Forms part of the ribosomal stalk which helps the ribosome interact with GTP-bound translation factors. Is thus essential for accurate translation. The polypeptide is Large ribosomal subunit protein bL12 (Cereibacter sphaeroides (strain ATCC 17023 / DSM 158 / JCM 6121 / CCUG 31486 / LMG 2827 / NBRC 12203 / NCIMB 8253 / ATH 2.4.1.) (Rhodobacter sphaeroides)).